The sequence spans 307 residues: tRNA pseudouridine synthase B (307 aa).

Catalysis depends on aspartate 41, which acts as the Nucleophile.

It belongs to the pseudouridine synthase TruB family. Type 1 subfamily.

It carries out the reaction uridine(55) in tRNA = pseudouridine(55) in tRNA. Responsible for synthesis of pseudouridine from uracil-55 in the psi GC loop of transfer RNAs. The protein is tRNA pseudouridine synthase B of Prochlorococcus marinus (strain MIT 9312).